Here is a 103-residue protein sequence, read N- to C-terminus: Carboxysome shell protein CcmK3 (103 aa).

One can recognise a BMC domain in the interval 4 to 91; sequence AVGVIQTLGF…PPENVLAVLP (88 aa).

It belongs to the bacterial microcompartments protein family. CcmK subfamily. In terms of assembly, forms mixed heterohexamers with CcmK4, probably with 1:5 CcmK3:CcmK4 stoichiometry. Only very weak interactions with CcmK1 and CcmK2 were seen. Bulky residues in the pore region probably preclude the formation of homohexamers by this subunit.

The protein localises to the carboxysome. Its function is as follows. A probably minor shell protein component of the carboxysome, a polyhedral inclusion where RuBisCO (ribulose bisphosphate carboxylase, rbcL-rbcS) is sequestered. This subunit probably does not form homohexamers. In Synechocystis sp. (strain ATCC 27184 / PCC 6803 / Kazusa), this protein is Carboxysome shell protein CcmK3.